Consider the following 200-residue polypeptide: ATP-dependent Clp protease proteolytic subunit (200 aa).

S97 acts as the Nucleophile in catalysis. H122 is a catalytic residue.

It belongs to the peptidase S14 family. Fourteen ClpP subunits assemble into 2 heptameric rings which stack back to back to give a disk-like structure with a central cavity, resembling the structure of eukaryotic proteasomes.

The protein localises to the cytoplasm. The catalysed reaction is Hydrolysis of proteins to small peptides in the presence of ATP and magnesium. alpha-casein is the usual test substrate. In the absence of ATP, only oligopeptides shorter than five residues are hydrolyzed (such as succinyl-Leu-Tyr-|-NHMec, and Leu-Tyr-Leu-|-Tyr-Trp, in which cleavage of the -Tyr-|-Leu- and -Tyr-|-Trp bonds also occurs).. Its function is as follows. Cleaves peptides in various proteins in a process that requires ATP hydrolysis. Has a chymotrypsin-like activity. Plays a major role in the degradation of misfolded proteins. The chain is ATP-dependent Clp protease proteolytic subunit from Oleidesulfovibrio alaskensis (strain ATCC BAA-1058 / DSM 17464 / G20) (Desulfovibrio alaskensis).